Consider the following 474-residue polypeptide: Probable periplasmic serine endoprotease DegP-like (474 aa).

The N-terminal stretch at 1-26 (MTRMTRHLALWMLLSLAILASQSAMA) is a signal peptide. Residues histidine 116, aspartate 146, and serine 219 each act as charge relay system in the active site. Substrate is bound by residues 217–219 (GNS) and 274–278 (LGVMI). 2 consecutive PDZ domains span residues 263–354 (LRND…LRNG) and 360–462 (TVTV…YRSG).

It belongs to the peptidase S1C family.

It is found in the periplasm. It catalyses the reaction Acts on substrates that are at least partially unfolded. The cleavage site P1 residue is normally between a pair of hydrophobic residues, such as Val-|-Val.. Might be efficient in the degradation of transiently denatured and unfolded proteins which accumulate in the periplasm following stress conditions. In Halomonas elongata (strain ATCC 33173 / DSM 2581 / NBRC 15536 / NCIMB 2198 / 1H9), this protein is Probable periplasmic serine endoprotease DegP-like (mucD).